The chain runs to 287 residues: N-acetylmannosamine kinase (287 aa).

Residues 5-12 (AIDIGGTK) and 131-138 (GVGGGIII) each bind ATP. Residues H155, C165, C167, and C172 each coordinate Zn(2+).

The protein belongs to the ROK (NagC/XylR) family. NanK subfamily. In terms of assembly, homodimer.

The enzyme catalyses an N-acyl-D-mannosamine + ATP = an N-acyl-D-mannosamine 6-phosphate + ADP + H(+). It functions in the pathway amino-sugar metabolism; N-acetylneuraminate degradation; D-fructose 6-phosphate from N-acetylneuraminate: step 2/5. Functionally, catalyzes the phosphorylation of N-acetylmannosamine (ManNAc) to ManNAc-6-P. In Vibrio cholerae serotype O1 (strain ATCC 39541 / Classical Ogawa 395 / O395), this protein is N-acetylmannosamine kinase.